Here is a 94-residue protein sequence, read N- to C-terminus: Small ribosomal subunit protein uS19 (94 aa).

The tract at residues 75 to 94 is disordered; sequence SHTRTFKGHAGDKKAAGSKR. Positions 83-94 are enriched in basic and acidic residues; it reads HAGDKKAAGSKR.

This sequence belongs to the universal ribosomal protein uS19 family.

Functionally, protein S19 forms a complex with S13 that binds strongly to the 16S ribosomal RNA. The polypeptide is Small ribosomal subunit protein uS19 (Nitrosomonas europaea (strain ATCC 19718 / CIP 103999 / KCTC 2705 / NBRC 14298)).